The primary structure comprises 411 residues: Citrate synthase (411 aa).

Active-site residues include H304 and D363.

This sequence belongs to the citrate synthase family.

It catalyses the reaction oxaloacetate + acetyl-CoA + H2O = citrate + CoA + H(+). Its pathway is carbohydrate metabolism; tricarboxylic acid cycle; isocitrate from oxaloacetate: step 1/2. This is Citrate synthase (gltA) from Rickettsia conorii subsp. caspia (strain A-167) (Astrakhan rickettsia).